The sequence spans 183 residues: uncharacterized protein (183 aa).

A signal peptide spans 1–17; it reads MVLFILVLYTCIQDGNG.

This is an uncharacterized protein from Saccharomyces cerevisiae (strain ATCC 204508 / S288c) (Baker's yeast).